Consider the following 567-residue polypeptide: Urease subunit alpha (567 aa).

Positions Gly128–Phe567 constitute a Urease domain. Ni(2+) is bound by residues His133, His135, and Lys216. At Lys216 the chain carries N6-carboxylysine. Position 218 (His218) interacts with substrate. Positions 245 and 271 each coordinate Ni(2+). Residue His319 is the Proton donor of the active site. Asp359 is a binding site for Ni(2+).

It belongs to the metallo-dependent hydrolases superfamily. Urease alpha subunit family. Heterotrimer of UreA (gamma), UreB (beta) and UreC (alpha) subunits. Three heterotrimers associate to form the active enzyme. Ni cation serves as cofactor. In terms of processing, carboxylation allows a single lysine to coordinate two nickel ions.

It localises to the cytoplasm. The catalysed reaction is urea + 2 H2O + H(+) = hydrogencarbonate + 2 NH4(+). It functions in the pathway nitrogen metabolism; urea degradation; CO(2) and NH(3) from urea (urease route): step 1/1. This is Urease subunit alpha from Pseudoalteromonas translucida (strain TAC 125).